The following is a 395-amino-acid chain: NAD(P)H-quinone oxidoreductase subunit H (395 aa).

This sequence belongs to the complex I 49 kDa subunit family. NDH-1 can be composed of about 15 different subunits; different subcomplexes with different compositions have been identified which probably have different functions.

It localises to the cellular thylakoid membrane. The enzyme catalyses a plastoquinone + NADH + (n+1) H(+)(in) = a plastoquinol + NAD(+) + n H(+)(out). It catalyses the reaction a plastoquinone + NADPH + (n+1) H(+)(in) = a plastoquinol + NADP(+) + n H(+)(out). Its function is as follows. NDH-1 shuttles electrons from an unknown electron donor, via FMN and iron-sulfur (Fe-S) centers, to quinones in the respiratory and/or the photosynthetic chain. The immediate electron acceptor for the enzyme in this species is believed to be plastoquinone. Couples the redox reaction to proton translocation, and thus conserves the redox energy in a proton gradient. Cyanobacterial NDH-1 also plays a role in inorganic carbon-concentration. The protein is NAD(P)H-quinone oxidoreductase subunit H of Prochlorococcus marinus (strain MIT 9515).